We begin with the raw amino-acid sequence, 310 residues long: Pirin-like protein At1g50590 (310 aa).

This sequence belongs to the pirin family.

The protein localises to the nucleus. The protein is Pirin-like protein At1g50590 of Arabidopsis thaliana (Mouse-ear cress).